Here is a 396-residue protein sequence, read N- to C-terminus: Elongation factor Tu (396 aa).

Positions 10–206 constitute a tr-type G domain; sequence KPHCNIGTIG…AVDAYIPQPE (197 aa). The tract at residues 19–26 is G1; it reads GHVDHGKT. 19–26 lines the GTP pocket; that stretch reads GHVDHGKT. Threonine 26 serves as a coordination point for Mg(2+). Positions 60–64 are G2; that stretch reads GITIS. A G3 region spans residues 81–84; it reads DCPG. Residues 81–85 and 136–139 each bind GTP; these read DCPGH and NKCD. The G4 stretch occupies residues 136–139; sequence NKCD. The tract at residues 174 to 176 is G5; it reads SAL.

The protein belongs to the TRAFAC class translation factor GTPase superfamily. Classic translation factor GTPase family. EF-Tu/EF-1A subfamily. In terms of assembly, monomer.

It localises to the cytoplasm. It catalyses the reaction GTP + H2O = GDP + phosphate + H(+). Functionally, GTP hydrolase that promotes the GTP-dependent binding of aminoacyl-tRNA to the A-site of ribosomes during protein biosynthesis. The chain is Elongation factor Tu from Rhodopseudomonas palustris (strain HaA2).